The following is a 300-amino-acid chain: Ribosomal protein L11 methyltransferase (300 aa).

Residues Thr152, Gly173, Asp195, and Asn234 each coordinate S-adenosyl-L-methionine.

The protein belongs to the methyltransferase superfamily. PrmA family.

It localises to the cytoplasm. It catalyses the reaction L-lysyl-[protein] + 3 S-adenosyl-L-methionine = N(6),N(6),N(6)-trimethyl-L-lysyl-[protein] + 3 S-adenosyl-L-homocysteine + 3 H(+). In terms of biological role, methylates ribosomal protein L11. This chain is Ribosomal protein L11 methyltransferase, found in Paraburkholderia xenovorans (strain LB400).